We begin with the raw amino-acid sequence, 114 residues long: Ribonuclease P protein component (114 aa).

It belongs to the RnpA family. As to quaternary structure, consists of a catalytic RNA component (M1 or rnpB) and a protein subunit.

It catalyses the reaction Endonucleolytic cleavage of RNA, removing 5'-extranucleotides from tRNA precursor.. Functionally, RNaseP catalyzes the removal of the 5'-leader sequence from pre-tRNA to produce the mature 5'-terminus. It can also cleave other RNA substrates such as 4.5S RNA. The protein component plays an auxiliary but essential role in vivo by binding to the 5'-leader sequence and broadening the substrate specificity of the ribozyme. The sequence is that of Ribonuclease P protein component from Borrelia turicatae (strain 91E135).